The primary structure comprises 326 residues: MQTNLLKPKIISVEALTANQAKVVMEPFERGYGHTLGNALRRVLLSSMVGYAPTEVAIAGVVHEYSTLDGVQEDVVNLLLNLKGIVFKLQSRDEVIINLRKEGPGVVTAKDIDLPHDVEIMNPDHVIAHLSAGGKLDMQIKVEKGRGYVPGNVRQYNDEATKIIGHIVLDASFSPVSRVSYAVESARVEQRTDLDRLVMTIETNGVLSPEEAIRQAASILVDQLVVFAALESSEVSGDLAPSRSSMVDPMLMRPVDDLELTVRSANCLKAENIYYIGDLIQRTENELLKTPNLGRKSLNEIKDVLAARGLSLGMKLESWPPANLEK.

The interval Met1–Glu231 is alpha N-terminal domain (alpha-NTD). The alpha C-terminal domain (alpha-CTD) stretch occupies residues Val247 to Lys326.

It belongs to the RNA polymerase alpha chain family. Homodimer. The RNAP catalytic core consists of 2 alpha, 1 beta, 1 beta' and 1 omega subunit. When a sigma factor is associated with the core the holoenzyme is formed, which can initiate transcription.

It catalyses the reaction RNA(n) + a ribonucleoside 5'-triphosphate = RNA(n+1) + diphosphate. Its function is as follows. DNA-dependent RNA polymerase catalyzes the transcription of DNA into RNA using the four ribonucleoside triphosphates as substrates. The sequence is that of DNA-directed RNA polymerase subunit alpha from Polynucleobacter necessarius subsp. necessarius (strain STIR1).